The following is a 407-amino-acid chain: Phenazine 1,6-dicarboxylic acid hydroxylase PhzS (407 aa).

Positions 17, 134, and 313 each coordinate FAD.

It depends on FAD as a cofactor.

The catalysed reaction is phenazine-1,6-dicarboxylate + NADH + O2 + 2 H(+) = 6-hydroxyphenazine-1-carboxylate + CO2 + NAD(+) + H2O. It catalyses the reaction 6-hydroxyphenazine-1-carboxylate + NADH + O2 + 2 H(+) = 1,6-dihydroxyphenazine + CO2 + NAD(+) + H2O. It carries out the reaction phenazine-1-carboxylate + NADH + O2 + 2 H(+) = 1-hydroxyphenazine + CO2 + NAD(+) + H2O. In terms of biological role, involved in the biosynthesis of phenazine natural products including myxin, an N(5),N(10)-dioxide phenazine antiobiotic, which has antimicrobial activity. Catalyzes the decarboxylative hydroxylations of phenazine 1,6-dicarboxylic acid (PDC) to produce 1,6-dihydroxyphenazine (DHP). Low activity with phenazine 1-carboxylic acid (PCA) to produce 1-hydroxyphenazine. The chain is Phenazine 1,6-dicarboxylic acid hydroxylase PhzS from Lysobacter antibioticus.